The sequence spans 155 residues: MAARAACVAVCRRLQQITTSDEPDTLYKRLSILVKAHDKAVLDSYEYFAVLAAKELGLSIKVHEPPRKIERFTLLKSVHIFKKHRVQYEMRTLYRCLELKHLTGCTANVYLEYIQRNLPEGVAMEVTKTQIQQLPEHIKEPMWETVSGEKEETKS.

This sequence belongs to the universal ribosomal protein uS10 family. Component of the mitochondrial ribosome small subunit (28S) which comprises a 12S rRNA and about 30 distinct proteins.

The protein resides in the mitochondrion. The protein is Small ribosomal subunit protein uS10m (Mrps10) of Rattus norvegicus (Rat).